The primary structure comprises 455 residues: 3-phosphoshikimate 1-carboxyvinyltransferase (455 aa).

Residues 1 to 23 (MSHGSNPRPATARKSSDLKGTLR) form a disordered region. 3-phosphoshikimate contacts are provided by K28, S29, and R33. Position 28 (K28) interacts with phosphoenolpyruvate. The phosphoenolpyruvate site is built by G100 and R128. 3-phosphoshikimate is bound by residues S173, Q175, D326, and K353. Residue Q175 participates in phosphoenolpyruvate binding. The active-site Proton acceptor is the D326. Phosphoenolpyruvate is bound by residues R357 and R405.

It belongs to the EPSP synthase family. Monomer.

It is found in the cytoplasm. It catalyses the reaction 3-phosphoshikimate + phosphoenolpyruvate = 5-O-(1-carboxyvinyl)-3-phosphoshikimate + phosphate. It functions in the pathway metabolic intermediate biosynthesis; chorismate biosynthesis; chorismate from D-erythrose 4-phosphate and phosphoenolpyruvate: step 6/7. In terms of biological role, catalyzes the transfer of the enolpyruvyl moiety of phosphoenolpyruvate (PEP) to the 5-hydroxyl of shikimate-3-phosphate (S3P) to produce enolpyruvyl shikimate-3-phosphate and inorganic phosphate. This chain is 3-phosphoshikimate 1-carboxyvinyltransferase, found in Rhizobium meliloti (strain 1021) (Ensifer meliloti).